The chain runs to 798 residues: Serine/threonine-protein kinase SIK2 (798 aa).

One can recognise a Protein kinase domain in the interval 26–277 (YDIERTLGKG…ISQIKQHKWM (252 aa)). ATP contacts are provided by residues 32–40 (LGKGNFAVV) and K55. D148 acts as the Proton acceptor in catalysis. At T181 the chain carries Phosphothreonine. The residue at position 185 (S185) is a Phosphoserine. In terms of domain architecture, UBA spans 302-342 (DYNEQVLGIMQTLGIDRQRTVESLQNSSYNHFAAIYYLLLE). Over residues 351–361 (QLSSRPATGRQ) the composition is skewed to polar residues. The interval 351–382 (QLSSRPATGRQQRPRSSEISNAEMPQDSLTSE) is disordered. S575 bears the Phosphoserine mark. Residues 672–691 (ACPQTSQTSATNGLPPSDSA) are disordered. The span at 673-685 (CPQTSQTSATNGL) shows a compositional bias: polar residues.

This sequence belongs to the protein kinase superfamily. CAMK Ser/Thr protein kinase family. SNF1 subfamily. The cofactor is Mg(2+). Post-translationally, phosphorylated at Thr-181 by STK11/LKB1 in complex with STE20-related adapter-alpha (STRADA) pseudo kinase and CAB39. As to expression, ubiquitously expressed in embryonic tissue.

The protein resides in the cytoplasm. It carries out the reaction L-seryl-[protein] + ATP = O-phospho-L-seryl-[protein] + ADP + H(+). The catalysed reaction is L-threonyl-[protein] + ATP = O-phospho-L-threonyl-[protein] + ADP + H(+). Activated by phosphorylation on Thr-181. In terms of biological role, phosphorylates IRS1 in insulin-stimulated adipocytes, potentially modulating the efficiency of insulin signal transduction. Inhibits CREB activity by phosphorylating and repressing the CREB-specific coactivators, CRTC1-3. This chain is Serine/threonine-protein kinase SIK2 (SIK2), found in Gallus gallus (Chicken).